The sequence spans 71 residues: Large ribosomal subunit protein uL29 (71 aa).

This sequence belongs to the universal ribosomal protein uL29 family.

This is Large ribosomal subunit protein uL29 from Rickettsia canadensis (strain McKiel).